The sequence spans 200 residues: H-2 class I histocompatibility antigen, Q9 alpha chain (200 aa).

Residues 1-21 (MALTMLLLLVAAALTLIETRA) form the signal peptide. The alpha-1 stretch occupies residues 22–111 (GQHSLQYFHT…AQSYYNQSKG (90 aa)). Over 22 to 200 (GQHSLQYFHT…RYLELGKETL (179 aa)) the chain is Extracellular. Residue Asn-107 is glycosylated (N-linked (GlcNAc...) asparagine). Residues 112-200 (GSHTLQWMYG…RYLELGKETL (89 aa)) are alpha-2. Cysteines 122 and 185 form a disulfide.

The protein belongs to the MHC class I family. In terms of assembly, heterodimer of an alpha chain and a beta chain (beta-2-microglobulin).

It localises to the membrane. In terms of biological role, involved in the presentation of foreign antigens to the immune system. The sequence is that of H-2 class I histocompatibility antigen, Q9 alpha chain (H2-Q9) from Mus musculus (Mouse).